Reading from the N-terminus, the 517-residue chain is Maturase K (517 aa).

It belongs to the intron maturase 2 family. MatK subfamily.

Its subcellular location is the plastid. It is found in the chloroplast. In terms of biological role, usually encoded in the trnK tRNA gene intron. Probably assists in splicing its own and other chloroplast group II introns. The sequence is that of Maturase K from Trillium maculatum (Spotted wakerobin).